Consider the following 865-residue polypeptide: AP-1 complex subunit gamma-1 (865 aa).

A disordered region spans residues 665–690 (AEPLETPVDEMTQSPQSSLSRAPSTS). The segment covering 675–690 (MTQSPQSSLSRAPSTS) has biased composition (polar residues). In terms of domain architecture, GAE spans 746 to 860 (KSYPPIVVFD…LDQVDFGKLP (115 aa)).

Belongs to the adaptor complexes large subunit family. Adaptor protein complex 1 (AP-1) is a heterotetramer composed of two large adaptins (gamma-type subunit apl4 and beta-type subunit apl2), a medium adaptin (mu-type subunit apm1) and a small adaptin (sigma-type subunit aps1). AP-1 interacts with clathrin.

It localises to the cytoplasmic vesicle. It is found in the clathrin-coated vesicle membrane. The protein localises to the golgi apparatus. Functionally, adaptins are components of the adaptor complexes which link clathrin to receptors in coated vesicles. Clathrin-associated protein complexes are believed to interact with the cytoplasmic tails of membrane proteins, leading to their selection and concentration. The AP-1 complex interacts directly with clathrin. The chain is AP-1 complex subunit gamma-1 (apl4) from Schizosaccharomyces pombe (strain 972 / ATCC 24843) (Fission yeast).